A 28-amino-acid polypeptide reads, in one-letter code: Gastrin-releasing peptide (28 aa).

Residue Met28 is modified to Methionine amide.

The protein belongs to the bombesin/neuromedin-B/ranatensin family.

The protein resides in the secreted. It is found in the cytoplasmic vesicle. The protein localises to the secretory vesicle lumen. Functionally, stimulates the release of gastrin and other gastrointestinal hormones. This is Gastrin-releasing peptide (GRP) from Alligator mississippiensis (American alligator).